Consider the following 241-residue polypeptide: Homeobox protein TGIF2LX (241 aa).

2 disordered regions span residues 1–58 (MEAA…GNLP) and 126–210 (TGKD…SPEE). Polar residues predominate over residues 21-39 (AKTQSPAQDTSIMSRNNAD). The homeobox; TALE-type DNA-binding region spans 48 to 111 (EHKKKRKGNL…INARRRILPD (64 aa)). The segment covering 195-206 (VSVTSPSSPELV) has biased composition (low complexity).

It belongs to the TALE/TGIF homeobox family. As to expression, specifically expressed in adult testis.

It localises to the nucleus. May have a transcription role in testis. This chain is Homeobox protein TGIF2LX (TGIF2LX), found in Homo sapiens (Human).